A 460-amino-acid chain; its full sequence is Metal cation symporter ZIP8 (460 aa).

A signal peptide spans 1-22 (MAPGRAVAGLLLLAAAGLGGVA). At 23-132 (EGPGLAFSED…PSHSEVWGYG (110 aa)) the chain is on the extracellular side. Residues Asn-40 and Asn-88 are each glycosylated (N-linked (GlcNAc...) asparagine). The chain crosses the membrane as a helical span at residues 133–153 (FLSVTIINLASLLGLILTPLI). Residues 154–160 (KKSYFPK) are Cytoplasmic-facing. The helical transmembrane segment at 161–181 (ILTFFVGLAIGTLFSNAIFQL) threads the bilayer. The Extracellular segment spans residues 182 to 191 (IPEAFGFDPK). The helical transmembrane segment at 192 to 212 (VDSYVEKAVAVFGGFYLLFFF) threads the bilayer. The Cytoplasmic segment spans residues 213-365 (ERMLKMLLKT…LNAGMSTRQA (153 aa)). Residues 343-348 (EEFPHE) carry the XEXPHE-motif motif. A helical membrane pass occupies residues 366–386 (LLFNFLSACSCYVGLAFGILV). At 387-388 (GN) the chain is on the extracellular side. Residues 389–409 (NFAPNIIFALAGGMFLYISLA) form a helical membrane-spanning segment. Residues 410–429 (DMFPEMNDMLREKVTGRKTD) lie on the Cytoplasmic side of the membrane. Residues 430–450 (FTFFMIQNAGMLTGFTAILLI) form a helical membrane-spanning segment. The Extracellular segment spans residues 451-460 (TLYAGEIELE).

Belongs to the ZIP transporter (TC 2.A.5) family. As to quaternary structure, homodimer. Post-translationally, N-glycosylated. N-glycosylation is not required for proper iron and zinc transport. In terms of tissue distribution, ubiquitously expressed. Expressed in thymus, placenta, lung, liver, pancreas, salivary gland and, to a lower extent, in spleen, testis, ovary, small intestine, colon, leukocyte, heart. Highest expression is observed in pancreas. Expressed by macrophages (at protein level). Expressed by microvascular capillary endothelial cells that constitute the blood-brain barrier (at protein level).

It is found in the cell membrane. Its subcellular location is the lysosome membrane. The protein localises to the apical cell membrane. It localises to the basolateral cell membrane. The enzyme catalyses Zn(2+)(out) + 2 hydrogencarbonate(out) = Zn(2+)(in) + 2 hydrogencarbonate(in). It catalyses the reaction selenite(out) + Zn(2+)(out) + hydrogencarbonate(out) = selenite(in) + Zn(2+)(in) + hydrogencarbonate(in). It carries out the reaction Mn(2+)(out) + 2 hydrogencarbonate(out) = Mn(2+)(in) + 2 hydrogencarbonate(in). The catalysed reaction is Fe(2+)(out) + 2 hydrogencarbonate(out) = Fe(2+)(in) + 2 hydrogencarbonate(in). The enzyme catalyses Cd(2+)(out) + 2 hydrogencarbonate(out) = Cd(2+)(in) + 2 hydrogencarbonate(in). It catalyses the reaction Co(2+)(out) + 2 hydrogencarbonate(out) = Co(2+)(in) + 2 hydrogencarbonate(in). Electroneutral divalent metal cation:bicarbonate symporter of the plasma membrane mediating the cellular uptake of zinc and manganese, two divalent metal cations important for development, tissue homeostasis and immunity. Transports an electroneutral complex composed of a divalent metal cation and two bicarbonate anions or alternatively a bicarbonate and a selenite anion. Thereby, it also contributes to the cellular uptake of selenium, an essential trace metal and micronutrient. Also imports cadmium a non-essential metal which is cytotoxic and carcinogenic. May also transport iron and cobalt through membranes. Through zinc import, indirectly regulates the metal-dependent transcription factor MTF1 and the expression of some metalloproteases involved in cartilage catabolism and also probably heart development. Also indirectly regulates the expression of proteins involved in cell morphology and cytoskeleton organization. Indirectly controls innate immune function and inflammatory response by regulating zinc cellular uptake which in turn modulates the expression of genes specific of these processes. Protects, for instance, cells from injury and death at the onset of inflammation. By regulating zinc influx into monocytes also directly modulates their adhesion to endothelial cells and arteries. Reclaims manganese from the bile at the apical membrane of hepatocytes, thereby regulating the activity of the manganese-dependent enzymes through the systemic levels of the nutrient. Also participates in manganese reabsorption in the proximal tubule of the kidney. By mediating the extracellular uptake of manganese by cells of the blood-brain barrier, may also play a role in the transport of the micronutrient to the brain. With manganese cellular uptake also participates in mitochondrial proper function. Finally, also probably functions intracellularly, translocating zinc from lysosome to cytosol to indirectly enhance the expression of specific genes during TCR-mediated T cell activation. This Homo sapiens (Human) protein is Metal cation symporter ZIP8.